A 373-amino-acid polypeptide reads, in one-letter code: Glutamate 5-kinase (373 aa).

Residue K12 participates in ATP binding. Residues S52, D139, and N154 each contribute to the substrate site. 216 to 222 (TGGMVTK) contributes to the ATP binding site. One can recognise a PUA domain in the interval 281-359 (RGNICIDDGA…DEINTVLAGN (79 aa)).

The protein belongs to the glutamate 5-kinase family.

The protein resides in the cytoplasm. It catalyses the reaction L-glutamate + ATP = L-glutamyl 5-phosphate + ADP. The protein operates within amino-acid biosynthesis; L-proline biosynthesis; L-glutamate 5-semialdehyde from L-glutamate: step 1/2. Functionally, catalyzes the transfer of a phosphate group to glutamate to form L-glutamate 5-phosphate. The chain is Glutamate 5-kinase from Dehalococcoides mccartyi (strain ATCC BAA-2266 / KCTC 15142 / 195) (Dehalococcoides ethenogenes (strain 195)).